The following is a 433-amino-acid chain: Staphylopine synthase (433 aa).

Residues 9–12, R33, 37–40, and D99 each bind NADP(+); these read TGPV and SEKS. H216 serves as the catalytic Proton donor/acceptor.

The protein belongs to the staphylopine dehydrogenase family. As to quaternary structure, homodimer.

It carries out the reaction staphylopine + NADP(+) + H2O = (2S)-2-amino-4-{[(1R)-1-carboxy-2-(1H-imidazol-4-yl)ethyl]amino}butanoate + pyruvate + NADPH + H(+). Functionally, catalyzes the NADPH-dependent reductive condensation of pyruvate to the intermediate formed by the adjacently encoded enzyme CntL, namely (2S)-2-amino-4-{[(1R)-1-carboxy-2-(1H-imidazol-4-yl)ethyl]amino}butanoate, leading to the production of staphylopine. This is the last step in the biosynthesis of the metallophore staphylopine, which is involved in the acquisition of nickel, cobalt, zinc, copper, and iron, and thus enables bacterial growth inside the host, where metal access is limited. Therefore, this enzyme probably contributes to staphylococcal virulence. Can use neither NADH nor alpha-ketoglutarate in place of NADPH and pyruvate, respectively. This Staphylococcus aureus (strain Mu50 / ATCC 700699) protein is Staphylopine synthase.